A 280-amino-acid polypeptide reads, in one-letter code: Pre-mRNA-splicing factor PRP21 (280 aa).

Residues 11-49 (DIKTTVNYIKQHGVEFENKLLEDERFSFIKKDDPLHEYY) form an SURP motif 1 repeat. Residues 53–72 (MNEPTDTVSGEDNDRKSERE) are disordered. An SURP motif 2 repeat occupies 95–135 (VIKLTARYYAKDKSIVEQMISKDGEARLNFMNSSHPLHKTF). Basic and acidic residues-rich tracts occupy residues 246 to 261 (EKIV…GDSK) and 269 to 280 (AVGETRLKKSKK). The interval 246 to 280 (EKIVSDQGKQKGGDSKGKKRKIRAVGETRLKKSKK) is disordered.

Belongs to the CWC complex (or CEF1-associated complex), a spliceosome sub-complex reminiscent of a late-stage spliceosome composed of the U2, U5 and U6 snRNAs and at least BUD13, BUD31, BRR2, CDC40, CEF1, CLF1, CUS1, CWC2, CWC15, CWC21, CWC22, CWC23, CWC24, CWC25, CWC27, ECM2, HSH155, IST3, ISY1, LEA1, MSL1, NTC20, PRP8, PRP9, PRP11, PRP19, PRP21, PRP22, PRP45, PRP46, SLU7, SMB1, SMD1, SMD2, SMD3, SMX2, SMX3, SNT309, SNU114, SPP2, SYF1, SYF2, RSE1 and YJU2.

Its subcellular location is the nucleus. MRNA splicing factors, PRP9, PRP11, and PRP21, are necessary for binding of the U2 snRNP to the pre-mRNA in an early step of spliceosome assembly. This chain is Pre-mRNA-splicing factor PRP21 (PRP21), found in Saccharomyces cerevisiae (strain ATCC 204508 / S288c) (Baker's yeast).